Here is a 421-residue protein sequence, read N- to C-terminus: Solute carrier family 35 member F3 (421 aa).

The tract at residues 25–45 (EGEERPRDSPGPAEAQAPAGV) is disordered. Helical transmembrane passes span 66 to 86 (IFWG…STQL), 98 to 118 (FTLT…YYVG), 149 to 169 (VFFT…YLYL), 179 to 199 (DVSV…WIVL), 208 to 228 (IVAA…DGFH), 232 to 252 (VIGI…KVLF), 266 to 286 (LFLS…PIIL), 305 to 325 (LCGF…GIAV), 326 to 346 (TYPT…AVID), and 352 to 372 (IVFN…FLLL). Residues 393–421 (KKEEPAEGAADLSSGPQSKNRRARPSFAR) form a disordered region. Basic residues predominate over residues 411–421 (KNRRARPSFAR).

This sequence belongs to the SLC35F solute transporter family. Expressed at the highest levels in the adult cerebellum.

The protein resides in the membrane. It carries out the reaction thiamine(in) = thiamine(out). Its function is as follows. Mediates thiamine transport. The chain is Solute carrier family 35 member F3 from Homo sapiens (Human).